The chain runs to 270 residues: ATP synthase subunit a (270 aa).

The next 5 membrane-spanning stretches (helical) occupy residues 37–57, 98–118, 143–163, 217–237, and 239–259; these read NVHI…LWVF, IAPL…MDLV, DVNI…YYSI, VVFI…GALP, and AIFH…LTIV.

This sequence belongs to the ATPase A chain family. In terms of assembly, F-type ATPases have 2 components, CF(1) - the catalytic core - and CF(0) - the membrane proton channel. CF(1) has five subunits: alpha(3), beta(3), gamma(1), delta(1), epsilon(1). CF(0) has three main subunits: a(1), b(2) and c(9-12). The alpha and beta chains form an alternating ring which encloses part of the gamma chain. CF(1) is attached to CF(0) by a central stalk formed by the gamma and epsilon chains, while a peripheral stalk is formed by the delta and b chains.

It localises to the cell inner membrane. Key component of the proton channel; it plays a direct role in the translocation of protons across the membrane. This chain is ATP synthase subunit a, found in Aliivibrio fischeri (strain ATCC 700601 / ES114) (Vibrio fischeri).